We begin with the raw amino-acid sequence, 457 residues long: Aromatic amino acid transport protein AroP (457 aa).

Residues 1–18 (MMEGQQHGEQLKRGLKNR) lie on the Cytoplasmic side of the membrane. The helical transmembrane segment at 19–39 (HIQLIALGGAIGTGLFLGSAS) threads the bilayer. At 40–42 (VIQ) the chain is on the periplasmic side. The chain crosses the membrane as a helical span at residues 43-63 (SAGPGIILGYAIAGFIAFLIM). The Cytoplasmic portion of the chain corresponds to 64-98 (RQLGEMVVEEPVAGSFSHFAYKYWGSFAGFASGWN). Residues 99 to 119 (YWVLYVLVAMAELTAVGKYIQ) form a helical membrane-spanning segment. At 120 to 124 (FWYPE) the chain is on the periplasmic side. The helical transmembrane segment at 125 to 145 (IPTWVSAAVFFVVINAINLTN) threads the bilayer. Topologically, residues 146-147 (VK) are cytoplasmic. Residues 148–168 (VFGEMEFWFAIIKVIAVVAMI) form a helical membrane-spanning segment. The Periplasmic portion of the chain corresponds to 169 to 192 (IFGGWLLFSGNGGPQATVSNLWDQ). The helical transmembrane segment at 193-213 (GGFLPHGFTGLVMMMAIIMFS) threads the bilayer. Over 214–239 (FGGLELVGITAAEADNPEQSIPKATN) the chain is Cytoplasmic. A helical membrane pass occupies residues 240 to 260 (QVIYRILIFYIGSLAVLLSLM). Over 261-279 (PWTRVTADTSPFVLIFHEL) the chain is Periplasmic. The helical transmembrane segment at 280 to 300 (GDTFVANALNIVVLTAALSVY) threads the bilayer. At 301-330 (NSCVYCNSRMLFGLAQQGNAPKALASVDKR) the chain is on the cytoplasmic side. Residues 331-351 (GVPVNTILVSALVTALCVLIN) traverse the membrane as a helical segment. Topologically, residues 352-359 (YLAPESAF) are periplasmic. Residues 360–380 (GLLMALVVSALVINWAMISLA) traverse the membrane as a helical segment. The Cytoplasmic segment spans residues 381-402 (HMKFRRAKQEQGVVTRFPALLY). Residues 403 to 423 (PLGNWICLLFMAAVLVIMLMT) form a helical membrane-spanning segment. Topologically, residues 424 to 426 (PGM) are periplasmic. The helical transmembrane segment at 427–447 (AISVYLIPVWLIVLGIGYLFK) threads the bilayer. Over 448–457 (EKTAKAVKAH) the chain is Cytoplasmic.

Belongs to the amino acid-polyamine-organocation (APC) superfamily. Amino acid transporter (AAT) (TC 2.A.3.1) family.

It localises to the cell inner membrane. It catalyses the reaction L-phenylalanine(in) + H(+)(in) = L-phenylalanine(out) + H(+)(out). It carries out the reaction L-tryptophan(in) + H(+)(in) = L-tryptophan(out) + H(+)(out). The catalysed reaction is L-tyrosine(in) + H(+)(in) = L-tyrosine(out) + H(+)(out). With respect to regulation, strong, mutual inhibition of uptake by tyrosine, phenylalanine, and tryptophan. Transport is also inhibited by the aromatic analogs p-fluorophenylalanine, beta-2-thienylalanine and 5-methyltryptophan. Its function is as follows. Permease that is involved in the active transport across the cytoplasmic membrane of all three aromatic amino acids, phenylalanine, tyrosine and tryptophan. The sequence is that of Aromatic amino acid transport protein AroP from Escherichia coli (strain K12).